A 275-amino-acid chain; its full sequence is 2,3,4,5-tetrahydropyridine-2,6-dicarboxylate N-succinyltransferase (275 aa).

The protein belongs to the transferase hexapeptide repeat family.

It is found in the cytoplasm. It carries out the reaction (S)-2,3,4,5-tetrahydrodipicolinate + succinyl-CoA + H2O = (S)-2-succinylamino-6-oxoheptanedioate + CoA. Its pathway is amino-acid biosynthesis; L-lysine biosynthesis via DAP pathway; LL-2,6-diaminopimelate from (S)-tetrahydrodipicolinate (succinylase route): step 1/3. The protein is 2,3,4,5-tetrahydropyridine-2,6-dicarboxylate N-succinyltransferase of Paraburkholderia phymatum (strain DSM 17167 / CIP 108236 / LMG 21445 / STM815) (Burkholderia phymatum).